Reading from the N-terminus, the 307-residue chain is Serine/threonine-protein phosphatase 4 catalytic subunit (307 aa).

An N-acetylalanine modification is found at alanine 2. 4 residues coordinate Mn(2+): aspartate 54, histidine 56, aspartate 82, and asparagine 114. Histidine 115 (proton donor) is an active-site residue. The Mn(2+) site is built by histidine 164 and histidine 238. Position 307 is a leucine methyl ester (leucine 307).

Belongs to the PPP phosphatase family. PP-4 (PP-X) subfamily. In terms of assembly, serine/threonine-protein phosphatase 4 (PP4) occurs in different assemblies of the catalytic and one or more regulatory subunits. Component of the PP4 complexes PPP4C-PPP4R1, PPP4C-PPP4R2, PPP4C-PPP4R2-PPP4R3A, PPP4C-PPP4R2-PPP4R3B and PPP4C-PPP4R4. The PPP4C-PPP4R2 complex appears to be a tetramer composed of 2 molecules of PPP4C and 2 molecules of PPP4R2. Interacts with REL, NFKB1/p50 and RELA. Interacts with SMN1 and GEMIN4. Interacts with IRS4 (phosphorylated). Interacts with SMEK1/PPP4R3A; the interaction requires PP4R2. Interacts with HDAC3. Requires Mn(2+) as cofactor. Post-translationally, methylation at the C-terminal Leu-307 is critical for interactions with regulatory subunits and functions in DNA repair.

Its subcellular location is the cytoplasm. It is found in the nucleus. It localises to the cytoskeleton. The protein localises to the microtubule organizing center. The protein resides in the centrosome. It catalyses the reaction O-phospho-L-seryl-[protein] + H2O = L-seryl-[protein] + phosphate. The enzyme catalyses O-phospho-L-threonyl-[protein] + H2O = L-threonyl-[protein] + phosphate. Protein phosphatase that is involved in many processes such as microtubule organization at centrosomes, maturation of spliceosomal snRNPs, apoptosis, DNA repair, tumor necrosis factor (TNF)-alpha signaling, activation of c-Jun N-terminal kinase MAPK8, regulation of histone acetylation, DNA damage checkpoint signaling, NF-kappa-B activation and cell migration. The PPP4C-PPP4R1 PP4 complex may play a role in dephosphorylation and regulation of HDAC3. The PPP4C-PPP4R2-PPP4R3A PP4 complex specifically dephosphorylates H2AX phosphorylated on Ser-140 (gamma-H2AX) generated during DNA replication and required for DNA DSB repair. Dephosphorylates NDEL1 at CDK1 phosphorylation sites and negatively regulates CDK1 activity in interphase. In response to DNA damage, catalyzes RPA2 dephosphorylation, an essential step for DNA repair since it allows the efficient RPA2-mediated recruitment of RAD51 to chromatin. In Rattus norvegicus (Rat), this protein is Serine/threonine-protein phosphatase 4 catalytic subunit (Ppp4c).